A 225-amino-acid polypeptide reads, in one-letter code: Ribosomal RNA large subunit methyltransferase E (225 aa).

5 residues coordinate S-adenosyl-L-methionine: G64, W66, D93, D109, and D138. The active-site Proton acceptor is K178.

It belongs to the class I-like SAM-binding methyltransferase superfamily. RNA methyltransferase RlmE family.

It is found in the cytoplasm. It catalyses the reaction uridine(2552) in 23S rRNA + S-adenosyl-L-methionine = 2'-O-methyluridine(2552) in 23S rRNA + S-adenosyl-L-homocysteine + H(+). In terms of biological role, specifically methylates the uridine in position 2552 of 23S rRNA at the 2'-O position of the ribose in the fully assembled 50S ribosomal subunit. The chain is Ribosomal RNA large subunit methyltransferase E from Cupriavidus pinatubonensis (strain JMP 134 / LMG 1197) (Cupriavidus necator (strain JMP 134)).